The sequence spans 602 residues: Elongation factor 4 (602 aa).

In terms of domain architecture, tr-type G spans 7–189; it reads SRIRNFSIIA…SIVQQVPPPA (183 aa). GTP is bound by residues 19–24 and 136–139; these read DHGKST and NKID.

Belongs to the TRAFAC class translation factor GTPase superfamily. Classic translation factor GTPase family. LepA subfamily.

It is found in the cell inner membrane. It catalyses the reaction GTP + H2O = GDP + phosphate + H(+). Its function is as follows. Required for accurate and efficient protein synthesis under certain stress conditions. May act as a fidelity factor of the translation reaction, by catalyzing a one-codon backward translocation of tRNAs on improperly translocated ribosomes. Back-translocation proceeds from a post-translocation (POST) complex to a pre-translocation (PRE) complex, thus giving elongation factor G a second chance to translocate the tRNAs correctly. Binds to ribosomes in a GTP-dependent manner. The protein is Elongation factor 4 of Picosynechococcus sp. (strain ATCC 27264 / PCC 7002 / PR-6) (Agmenellum quadruplicatum).